The following is a 327-amino-acid chain: Serine/threonine-protein phosphatase PP1-1 (327 aa).

4 residues coordinate Mn(2+): D63, H65, D91, and N123. Residue H124 is the Proton donor of the active site. Mn(2+) contacts are provided by H172 and H247. The tract at residues 305-327 is disordered; that stretch reads GYQGSSQNWHMTPPRKNKTGNSK. T316 is subject to Phosphothreonine; by CDC2. Residues 317-327 show a composition bias toward basic residues; the sequence is PPRKNKTGNSK.

This sequence belongs to the PPP phosphatase family. PP-1 subfamily. In terms of assembly, oligomer. Mn(2+) serves as cofactor.

It localises to the nucleus. It catalyses the reaction O-phospho-L-seryl-[protein] + H2O = L-seryl-[protein] + phosphate. The catalysed reaction is O-phospho-L-threonyl-[protein] + H2O = L-threonyl-[protein] + phosphate. Essential role in cell cycle control. PP1 is perhaps required for exit from mitosis. The chain is Serine/threonine-protein phosphatase PP1-1 (dis2) from Schizosaccharomyces pombe (strain 972 / ATCC 24843) (Fission yeast).